The following is a 25-amino-acid chain: Caerin 1.1 (25 aa).

Leu-25 is subject to Leucine amide.

As to expression, expressed by the skin dorsal glands.

Its subcellular location is the secreted. Its function is as follows. Antibacterial peptide with wide spectrum of activity. Active against the Gram-positive bacteria B.cereus (MIC=50 ug/ml), E.faecalis (MIC=25 ug/ml), L.lactis (MIC=1.5 ug/ml), L.innocua (MIC=25 ug/ml), S.aureus (MIC=3 ug/ml), S.epidermidis (MIC=12 ug/ml) and S.uberis (MIC=12 ug/ml), and against the Gram-negative bacteria E.coli (MIC=100 ug/ml) and P.multocida (MIC=25 ug/ml). The sequence is that of Caerin 1.1 from Litoria peronii (Emerald spotted tree frog).